Here is a 298-residue protein sequence, read N- to C-terminus: NFU1 iron-sulfur cluster scaffold homolog, mitochondrial (298 aa).

The nifU stretch occupies residues 194-262 (IKELLDTRIR…IPEVESVEQV (69 aa)). [4Fe-4S] cluster contacts are provided by Cys-231 and Cys-234.

This sequence belongs to the NifU family.

The protein localises to the mitochondrion. Its function is as follows. Molecular scaffold for [Fe-S] cluster assembly of mitochondrial iron-sulfur proteins. This is NFU1 iron-sulfur cluster scaffold homolog, mitochondrial from Drosophila grimshawi (Hawaiian fruit fly).